The chain runs to 282 residues: MLFNLNYIDPTAFSIGPLSIKWYGIIIAVGILIGYFIAQESLKYVGLHKDRLVDVIFYSAIFGFIAARIYFVIFQWPYYAQNPIEIPMIWHGGIAIHGGLLGGFITGIIVCKIKNLNPFQIGDIVAPSIILAQGIGRWGNFMNHEAHGGPVSRTFLENLHIPEFIIRNMYIEGVYYHPTFLYESIWDILGFIILITIRKHLRVGETFTLYLIWYSIGRFFVEGLRTDSLMLTSHIRVAQLVSVILIIIGLVILIYRRIKYQPSLYKEAGPLTWNSSKAKVKS.

Transmembrane regions (helical) follow at residues 18-38 (LSIK…YFIA), 55-75 (VIFY…VIFQ), and 89-109 (IWHG…TGII). Arginine 137 contributes to the a 1,2-diacyl-sn-glycero-3-phospho-(1'-sn-glycerol) binding site. The next 2 membrane-spanning stretches (helical) occupy residues 203–223 (VGET…FVEG) and 235–255 (IRVA…ILIY).

The protein belongs to the Lgt family.

The protein resides in the cell membrane. It catalyses the reaction L-cysteinyl-[prolipoprotein] + a 1,2-diacyl-sn-glycero-3-phospho-(1'-sn-glycerol) = an S-1,2-diacyl-sn-glyceryl-L-cysteinyl-[prolipoprotein] + sn-glycerol 1-phosphate + H(+). The protein operates within protein modification; lipoprotein biosynthesis (diacylglyceryl transfer). Its function is as follows. Catalyzes the transfer of the diacylglyceryl group from phosphatidylglycerol to the sulfhydryl group of the N-terminal cysteine of a prolipoprotein, the first step in the formation of mature lipoproteins. In Staphylococcus haemolyticus (strain JCSC1435), this protein is Phosphatidylglycerol--prolipoprotein diacylglyceryl transferase.